We begin with the raw amino-acid sequence, 264 residues long: Apolipoprotein A-I (264 aa).

The first 18 residues, 1 to 18 (MRGVLVTLAVLFLTGTQA), serve as a signal peptide directing secretion. Tandem repeats lie at residues 67 to 88 (LKLADNLDTLSAAAAKLREDMT) and 89 to 110 (PYYREVREMWLKDTEALRAELT). Positions 67 to 264 (LKLADNLDTL…LLDEVQKTMA (198 aa)) are 10 X approximate tandem repeats. Residues 111–121 (KDLEEVKEKIR) form a 3; half-length repeat. Tandem repeats lie at residues 122-143 (PFLDQFSAKWTEEVEQYRQRLA), 144-165 (PVAQELKDLTKQKVELMQAKLT), 166-187 (PVAEEVRDRLREQVEELRKNLA), 188-209 (PYSSELRQKLSQKLEEIRERGI), and 210-231 (PQASEYQAKVVEQLSNLREKMT). One copy of the 9; half-length repeat lies at 232 to 242 (PLVQEFKERLT). Residues 243–264 (PYAENLKNRLIDLLDEVQKTMA) form repeat 10.

The protein belongs to the apolipoprotein A1/A4/E family. Major protein of VLDL, HDL, LDL and in chylomicrons. Expressed in a number of tissues including liver, small intestine, lung, kidney, heart and muscle with highest expression in liver and small intestine.

The protein localises to the secreted. Its function is as follows. Participates in the reverse transport of cholesterol from tissues to the liver for excretion by promoting cholesterol efflux from tissues and by acting as a cofactor for the lecithin cholesterol acyltransferase (LCAT). The polypeptide is Apolipoprotein A-I (APOA1) (Coturnix japonica (Japanese quail)).